The chain runs to 706 residues: Translation initiation factor IF-2 (706 aa).

Basic and acidic residues predominate over residues 55–81; it reads AKETANEKPAEQKKQSSNKINDRKKND. A disordered region spans residues 55–127; it reads AKETANEKPA…KPKKELPEKI (73 aa). The span at 82–98 shows a compositional bias: low complexity; sequence VQNNQFNKNKKNNNQNK. The tr-type G domain occupies 207 to 376; that stretch reads VRPPVVTIMG…LLVSEVGELK (170 aa). Positions 216-223 are G1; the sequence is GHVDHGKT. 216–223 serves as a coordination point for GTP; it reads GHVDHGKT. The tract at residues 241–245 is G2; it reads GITQH. The segment at 262 to 265 is G3; the sequence is DTPG. Residues 262 to 266 and 316 to 319 each bind GTP; these read DTPGH and NKID. Positions 316–319 are G4; the sequence is NKID. The segment at 352–354 is G5; sequence SAK.

This sequence belongs to the TRAFAC class translation factor GTPase superfamily. Classic translation factor GTPase family. IF-2 subfamily.

The protein resides in the cytoplasm. In terms of biological role, one of the essential components for the initiation of protein synthesis. Protects formylmethionyl-tRNA from spontaneous hydrolysis and promotes its binding to the 30S ribosomal subunits. Also involved in the hydrolysis of GTP during the formation of the 70S ribosomal complex. The protein is Translation initiation factor IF-2 of Bacillus pumilus (strain SAFR-032).